Here is a 269-residue protein sequence, read N- to C-terminus: Putative phosphoenolpyruvate synthase regulatory protein (269 aa).

149-156 is an ADP binding site; the sequence is GVSRSGKT.

Belongs to the pyruvate, phosphate/water dikinase regulatory protein family. PSRP subfamily.

It catalyses the reaction [pyruvate, water dikinase] + ADP = [pyruvate, water dikinase]-phosphate + AMP + H(+). The catalysed reaction is [pyruvate, water dikinase]-phosphate + phosphate + H(+) = [pyruvate, water dikinase] + diphosphate. Functionally, bifunctional serine/threonine kinase and phosphorylase involved in the regulation of the phosphoenolpyruvate synthase (PEPS) by catalyzing its phosphorylation/dephosphorylation. In Pseudoalteromonas translucida (strain TAC 125), this protein is Putative phosphoenolpyruvate synthase regulatory protein.